Reading from the N-terminus, the 447-residue chain is Serine/threonine-protein phosphatase 2A 55 kDa regulatory subunit B alpha isoform (447 aa).

Position 2 is an N-acetylalanine (Ala-2). 7 WD repeats span residues 11–80 (QWCF…FQSH), 94–174 (EKIN…IFAN), 175–218 (AHTY…VDIK), 227–270 (EVIT…KLFE), 288–325 (ISDV…TYQV), 347–381 (ECCW…TLEA), and 414–446 (DFNK…QDKV).

This sequence belongs to the phosphatase 2A regulatory subunit B family. In terms of assembly, PP2A consists of a common heterodimeric core enzyme, composed of a 36 kDa catalytic subunit (subunit C) and a 65 kDa constant regulatory subunit (PR65 or subunit A), that associates with a variety of regulatory subunits. Proteins that associate with the core dimer include three families of regulatory subunits B (the R2/B/PR55/B55, R3/B''/PR72/PR130/PR59 and R5/B'/B56 families), the 48 kDa variable regulatory subunit, viral proteins, and cell signaling molecules. Interacts with the PP2A C catalytic subunit PPP2CA. Interacts with the PP2A A subunit PPP2R1A. Interacts with TP53. Interacts with IER5. Interacts with MFHAS1; the interaction is direct. Interacts with PABIR1/FAM122A (via its N-terminus); the interaction is direct and inhibits PP2A activity. Interacts with ARPP19; the interaction is direct and inhibits PP2A activity. Interacts with CRTC3. Expressed in all tissues examined.

Its function is as follows. Substrate-recognition subunit of protein phosphatase 2A (PP2A) that plays a key role in cell cycle by controlling mitosis entry and exit. Involved in chromosome clustering during late mitosis by mediating dephosphorylation of MKI67. Essential for serine/threonine-protein phosphatase 2A-mediated dephosphorylation of WEE1, preventing its ubiquitin-mediated proteolysis, increasing WEE1 protein levels, and promoting the G2/M checkpoint. This chain is Serine/threonine-protein phosphatase 2A 55 kDa regulatory subunit B alpha isoform (PPP2R2A), found in Homo sapiens (Human).